We begin with the raw amino-acid sequence, 317 residues long: MIFSTLERILTHISFSVVSIGITIYLITFLVDEIRGLYASSERGMTATAFCLTGLLITRWVYSRHFPLSDLYESLIFLSWSLSIIHKIFDFKNNQNHLSAITAPSAFFTQGFATSGFLTKMHQSRILVPALQVQWLMMHVSMMVLGYAALLCGSLLSTALLVITFRKVIRLFLKRKNFVHVNGSFCFSEIQYMNEKKNVFLNSLSARNYYRYQVIQQLDRWSYRIISLGFIFLTTGILSGAVWANEAWGSYWNWDPKETWAFITWTIFGIYLHTRTNTKWEGVNSAIVASMGFLIIWICYFGVNLLGIGLHSYGSFN.

The next 8 helical transmembrane spans lie at 9–29 (ILTH…LITF), 46–63 (TATA…WVYS), 71–91 (LYES…IFDF), 98–118 (LSAI…SGFL), 143–163 (MVLG…LLVI), 225–245 (IISL…VWAN), 258–273 (ETWA…IYLH), and 286–306 (AIVA…VNLL).

It belongs to the CcmF/CycK/Ccl1/NrfE/CcsA family. In terms of assembly, may interact with Ccs1.

Its subcellular location is the plastid. It localises to the chloroplast thylakoid membrane. Its function is as follows. Required during biogenesis of c-type cytochromes (cytochrome c6 and cytochrome f) at the step of heme attachment. This Citrus sinensis (Sweet orange) protein is Cytochrome c biogenesis protein CcsA.